The following is a 20-amino-acid chain: Alpha-amylase (20 aa).

The enzyme catalyses Endohydrolysis of (1-&gt;4)-alpha-D-glucosidic linkages in polysaccharides containing three or more (1-&gt;4)-alpha-linked D-glucose units.. Strongly inhibited by Hg (2+). Inhibited by Zn (2+). Activated by Fe (2+), Mg (2+) and Ba (2+). Alpha-amylase active towards amylose, starch, amylopectin and maltodextrins. Has lower activity towards glycogen, and is not active towards alpha/beta-cyclodextrin. The sequence is that of Alpha-amylase from Bacillus sp.